The sequence spans 159 residues: Probable acetolactate synthase small subunit (159 aa).

The 75-residue stretch at 4–78 (TIAVLVENKP…ETIKVSEITE (75 aa)) folds into the ACT domain.

This sequence belongs to the acetolactate synthase small subunit family. In terms of assembly, dimer of large and small chains.

The enzyme catalyses 2 pyruvate + H(+) = (2S)-2-acetolactate + CO2. The protein operates within amino-acid biosynthesis; L-isoleucine biosynthesis; L-isoleucine from 2-oxobutanoate: step 1/4. It functions in the pathway amino-acid biosynthesis; L-valine biosynthesis; L-valine from pyruvate: step 1/4. This Archaeoglobus fulgidus (strain ATCC 49558 / DSM 4304 / JCM 9628 / NBRC 100126 / VC-16) protein is Probable acetolactate synthase small subunit (ilvH).